Reading from the N-terminus, the 92-residue chain is Transcription factor PRE5 (92 aa).

The 56-residue stretch at 4–59 (RRSRQTSNASRISDDQMIDLVSKLRQFLPEIHERRRSDKVSASKVLQETCNYIRKL) folds into the bHLH domain.

It belongs to the bHLH protein family. In terms of assembly, interacts with IBH1.

The protein resides in the nucleus. Its function is as follows. Atypical and probable non DNA-binding bHLH transcription factor that integrates multiple signaling pathways to regulate cell elongation and plant development. May have a regulatory role in various aspects of gibberellin-dependent growth and development. This is Transcription factor PRE5 (PRE5) from Arabidopsis thaliana (Mouse-ear cress).